The chain runs to 306 residues: N-acetylmuramic acid 6-phosphate etherase (306 aa).

One can recognise an SIS domain in the interval Thr59–Lys222. The active-site Proton donor is the Glu87. Glu118 is a catalytic residue.

The protein belongs to the GCKR-like family. MurNAc-6-P etherase subfamily. As to quaternary structure, homodimer.

It carries out the reaction N-acetyl-D-muramate 6-phosphate + H2O = N-acetyl-D-glucosamine 6-phosphate + (R)-lactate. It participates in amino-sugar metabolism; N-acetylmuramate degradation. Specifically catalyzes the cleavage of the D-lactyl ether substituent of MurNAc 6-phosphate, producing GlcNAc 6-phosphate and D-lactate. The chain is N-acetylmuramic acid 6-phosphate etherase from Microcystis aeruginosa (strain NIES-843 / IAM M-2473).